We begin with the raw amino-acid sequence, 720 residues long: Probable GTPase-activating protein GYL1 (720 aa).

Met1 carries the post-translational modification N-acetylmethionine. Over residues 1–52 (MNSNEDIHEERIEVPRTPHQTQPEKDSDRIALRDEISVPEGDEKAYSDEKVE) the composition is skewed to basic and acidic residues. The segment at 1–132 (MNSNEDIHEE…TSPPLPPRAD (132 aa)) is disordered. Residue Thr17 is modified to Phosphothreonine. The residue at position 37 (Ser37) is a Phosphoserine. The span at 54 to 66 (ATTNASSNFGSNE) shows a compositional bias: polar residues. Ser73 is subject to Phosphoserine. Over residues 95–108 (SKTILPSDDLSQQL) the composition is skewed to polar residues. Residues 111-120 (EESKVEEALK) show a composition bias toward basic and acidic residues. Position 139 is a phosphoserine (Ser139). 2 disordered regions span residues 144 to 164 (SLPP…RPQL) and 179 to 210 (APHG…PRRI). Polar residues predominate over residues 184–196 (ATPSKSPTSAVGN). Residues 297–477 (GIPAAYRLVV…RIGDMVFLEG (181 aa)) enclose the Rab-GAP TBC domain. Residue Lys498 forms a Glycyl lysine isopeptide (Lys-Gly) (interchain with G-Cter in SUMO) linkage. A coiled-coil region spans residues 572–696 (QYKSITEKNL…EIKTANKNGT (125 aa)).

Belongs to the GYP5 family. As to quaternary structure, interacts with GYP5 and RVS167. Is part of SEC4-containing complexes.

It localises to the cytoplasm. It is found in the bud. The protein resides in the bud neck. Functionally, probable GTPase-activating protein which stimulates the GTP hydrolysis rate by GYP5 of YPT1 and SEC4. Involved in ER to Golgi trafficking and polarized exocytosis. The sequence is that of Probable GTPase-activating protein GYL1 (GYL1) from Saccharomyces cerevisiae (strain ATCC 204508 / S288c) (Baker's yeast).